Here is a 158-residue protein sequence, read N- to C-terminus: HVA22-like protein f (158 aa).

The next 3 helical transmembrane spans lie at 2–22 (GFII…VMLL), 41–61 (QQWL…LSVW), and 63–83 (VLAW…WLVL).

This sequence belongs to the DP1 family.

It is found in the membrane. The protein is HVA22-like protein f (HVA22F) of Arabidopsis thaliana (Mouse-ear cress).